A 75-amino-acid polypeptide reads, in one-letter code: Small ribosomal subunit protein bS18 (75 aa).

The protein belongs to the bacterial ribosomal protein bS18 family. As to quaternary structure, part of the 30S ribosomal subunit. Forms a tight heterodimer with protein bS6.

Binds as a heterodimer with protein bS6 to the central domain of the 16S rRNA, where it helps stabilize the platform of the 30S subunit. The sequence is that of Small ribosomal subunit protein bS18 from Psychromonas ingrahamii (strain DSM 17664 / CCUG 51855 / 37).